Consider the following 515-residue polypeptide: Envelope glycoprotein (515 aa).

The signal sequence occupies residues 1 to 33 (MPKERRSRRRPEPIIRWVSLTLTLLALCQPIQT). Topologically, residues 34 to 435 (WRCSLSLGNQ…LGLTAWVRET (402 aa)) are extracellular. 2 N-linked (GlcNAc...) asparagine; by host glycosylation sites follow: Asn129 and Asn203. Positions 212-215 (CAIC) match the CXXC motif. 3 disulfides stabilise this stretch: Cys212–Cys215, Cys212–Cys392, and Cys384–Cys391. 5 N-linked (GlcNAc...) asparagine; by host glycosylation sites follow: Asn230, Asn251, Asn256, Asn271, and Asn287. The segment at 304–324 (VAALTLGLALSVGLTGIKVAV) is fusion peptide. Coiled coils occupy residues 330 to 376 (QRLT…WLYI) and 388 to 420 (NEPCCFLRIQNDSIIRLGDLQPLSQRVSTDWQW). A glycan (N-linked (GlcNAc...) asparagine; by host) is linked at Asn351. The immunosuppression stretch occupies residues 365–381 (AQNRRGLDWLYIRLGFQ). A CX6CC motif is present at residues 384–392 (CPTINEPCC). Asn398 carries N-linked (GlcNAc...) asparagine; by host glycosylation. A helical transmembrane segment spans residues 436 to 456 (IHSVLSLFLLALLLLFLAPCL). Cys455 carries S-palmitoyl cysteine; by host lipidation. Residues 457 to 515 (IKCLTSRLSKLLRQAPHFPEISFPPKPDSDYQALLPSAPEIYSHLSPTKPDYINLRPCP) are Cytoplasmic-facing.

The mature envelope protein (Env) consists of a trimer of SU-TM heterodimers attached by a labile interchain disulfide bond. In terms of processing, specific enzymatic cleavages in vivo yield mature proteins. Envelope glycoproteins are synthesized as an inactive precursor that is N-glycosylated and processed likely by host cell furin or by a furin-like protease in the Golgi to yield the mature SU and TM proteins. The cleavage site between SU and TM requires the minimal sequence [KR]-X-[KR]-R. Post-translationally, the CXXC motif is highly conserved across a broad range of retroviral envelope proteins. It is thought to participate in the formation of a labile disulfide bond possibly with the CX6CC motif present in the transmembrane protein. Isomerization of the intersubunit disulfide bond to an SU intrachain disulfide bond is thought to occur upon receptor recognition in order to allow membrane fusion. The transmembrane protein is palmitoylated.

It is found in the virion membrane. It localises to the host cell membrane. Its function is as follows. The surface protein (SU) attaches the virus to the host cell by binding to its receptor. This interaction triggers the refolding of the transmembrane protein (TM) and is thought to activate its fusogenic potential by unmasking its fusion peptide. Fusion occurs at the host cell plasma membrane. Functionally, the transmembrane protein (TM) acts as a class I viral fusion protein. Under the current model, the protein has at least 3 conformational states: pre-fusion native state, pre-hairpin intermediate state, and post-fusion hairpin state. During viral and target cell membrane fusion, the coiled coil regions (heptad repeats) assume a trimer-of-hairpins structure, positioning the fusion peptide in close proximity to the C-terminal region of the ectodomain. The formation of this structure appears to drive apposition and subsequent fusion of viral and target cell membranes. Membranes fusion leads to delivery of the nucleocapsid into the cytoplasm. The protein is Envelope glycoprotein (env) of Bovine leukemia virus (isolate Australian) (BLV).